Here is an 88-residue protein sequence, read N- to C-terminus: Small ribosomal subunit protein bS20 (88 aa).

Positions 1-21 (MANTTSAKKATRKIARRTAVN) are disordered.

Belongs to the bacterial ribosomal protein bS20 family.

In terms of biological role, binds directly to 16S ribosomal RNA. This Sinorhizobium fredii (strain NBRC 101917 / NGR234) protein is Small ribosomal subunit protein bS20.